The chain runs to 78 residues: D-alanyl carrier protein (78 aa).

The Carrier domain maps to 1–78 (MDFNQEVLSV…QIIKQLNELR (78 aa)). At S36 the chain carries O-(pantetheine 4'-phosphoryl)serine.

This sequence belongs to the DltC family. In terms of processing, 4'-phosphopantetheine is transferred from CoA to a specific serine of apo-DCP.

It is found in the cytoplasm. It functions in the pathway cell wall biogenesis; lipoteichoic acid biosynthesis. In terms of biological role, carrier protein involved in the D-alanylation of lipoteichoic acid (LTA). The loading of thioester-linked D-alanine onto DltC is catalyzed by D-alanine--D-alanyl carrier protein ligase DltA. The DltC-carried D-alanyl group is further transferred to cell membrane phosphatidylglycerol (PG) by forming an ester bond, probably catalyzed by DltD. D-alanylation of LTA plays an important role in modulating the properties of the cell wall in Gram-positive bacteria, influencing the net charge of the cell wall. This is D-alanyl carrier protein from Bacillus licheniformis (strain ATCC 14580 / DSM 13 / JCM 2505 / CCUG 7422 / NBRC 12200 / NCIMB 9375 / NCTC 10341 / NRRL NRS-1264 / Gibson 46).